The sequence spans 644 residues: Exoribonuclease 2 (644 aa).

The RNB domain maps to 189 to 516 (RKDLTALDFV…NHRLLKAVIK (328 aa)). In terms of domain architecture, S1 motif spans 561 to 643 (DTRFAAEIVD…ETRSIIARPV (83 aa)).

This sequence belongs to the RNR ribonuclease family. RNase II subfamily.

Its subcellular location is the cytoplasm. The enzyme catalyses Exonucleolytic cleavage in the 3'- to 5'-direction to yield nucleoside 5'-phosphates.. Involved in mRNA degradation. Hydrolyzes single-stranded polyribonucleotides processively in the 3' to 5' direction. This Escherichia coli O157:H7 protein is Exoribonuclease 2.